Reading from the N-terminus, the 621-residue chain is tRNA uridine 5-carboxymethylaminomethyl modification enzyme MnmG (621 aa).

G9–G14 provides a ligand contact to FAD. G270–F284 contacts NAD(+).

It belongs to the MnmG family. In terms of assembly, homodimer. Heterotetramer of two MnmE and two MnmG subunits. FAD is required as a cofactor.

It localises to the cytoplasm. Its function is as follows. NAD-binding protein involved in the addition of a carboxymethylaminomethyl (cmnm) group at the wobble position (U34) of certain tRNAs, forming tRNA-cmnm(5)s(2)U34. This Borreliella burgdorferi (strain ATCC 35210 / DSM 4680 / CIP 102532 / B31) (Borrelia burgdorferi) protein is tRNA uridine 5-carboxymethylaminomethyl modification enzyme MnmG.